The sequence spans 670 residues: DNA ligase (670 aa).

NAD(+)-binding positions include 34–38 (DAEYD), 83–84 (SL), and Glu117. Lys119 (N6-AMP-lysine intermediate) is an active-site residue. NAD(+) contacts are provided by Arg140, Glu177, Lys293, and Lys317. Positions 411, 414, 429, and 434 each coordinate Zn(2+). One can recognise a BRCT domain in the interval 591-670 (KVGGRFTGKT…DEFLAMLEEG (80 aa)).

It belongs to the NAD-dependent DNA ligase family. LigA subfamily. Requires Mg(2+) as cofactor. The cofactor is Mn(2+).

It catalyses the reaction NAD(+) + (deoxyribonucleotide)n-3'-hydroxyl + 5'-phospho-(deoxyribonucleotide)m = (deoxyribonucleotide)n+m + AMP + beta-nicotinamide D-nucleotide.. Functionally, DNA ligase that catalyzes the formation of phosphodiester linkages between 5'-phosphoryl and 3'-hydroxyl groups in double-stranded DNA using NAD as a coenzyme and as the energy source for the reaction. It is essential for DNA replication and repair of damaged DNA. In Geobacter sulfurreducens (strain ATCC 51573 / DSM 12127 / PCA), this protein is DNA ligase.